Here is a 319-residue protein sequence, read N- to C-terminus: Inactive hydroxysteroid dehydrogenase-like protein 1 (319 aa).

The required for mitochondria translocation stretch occupies residues 2–82 (AAVDSFQLLY…CGASEAIAKA (81 aa)). Residues 74-80 (GASEAIA), lysine 99, and aspartate 125 contribute to the NADP(+) site.

Belongs to the short-chain dehydrogenases/reductases (SDR) family. 17-beta-HSD 3 subfamily.

The protein localises to the mitochondrion. In Danio rerio (Zebrafish), this protein is Inactive hydroxysteroid dehydrogenase-like protein 1 (hsdl1).